The sequence spans 224 residues: GrpE protein homolog 2, mitochondrial (224 aa).

The transit peptide at 1–31 (MAARLLWAVRRRMQPLAAHAASEGRGWLHPF) directs the protein to the mitochondrion. The residue at position 141 (K141) is an N6-acetyllysine.

Belongs to the GrpE family. In terms of assembly, probable component of the PAM complex at least composed of a mitochondrial HSP70 protein, GRPEL1 or GRPEL2, TIMM44, TIMM16/PAM16 and TIMM14/DNAJC19.

It is found in the mitochondrion matrix. Its function is as follows. Essential component of the PAM complex, a complex required for the translocation of transit peptide-containing proteins from the inner membrane into the mitochondrial matrix in an ATP-dependent manner. Seems to control the nucleotide-dependent binding of mitochondrial HSP70 to substrate proteins. Stimulates ATPase activity of mt-HSP70. May also serve to modulate the interconversion of oligomeric (inactive) and monomeric (active) forms of mt-HSP70. The sequence is that of GrpE protein homolog 2, mitochondrial (GRPEL2) from Bos taurus (Bovine).